The following is a 446-amino-acid chain: Telomere-binding protein 51 kDa subunit (446 aa).

The protein belongs to the telombin family. In terms of assembly, monomer.

The protein resides in the nucleus. It localises to the chromosome. The protein localises to the telomere. Its function is as follows. May function as protective capping of the single-stranded telomeric overhang. May also participate in telomere length regulation during DNA replication. Binds specifically to the T4G4-containing extension on the 3'strand and protects this region of the telomere from nuclease digestion and chemical modification. In Euplotes crassus, this protein is Telomere-binding protein 51 kDa subunit.